A 181-amino-acid chain; its full sequence is Acireductone dioxygenase (181 aa).

Fe(2+) is bound by residues His-97, His-99, Glu-103, and His-141. Ni(2+)-binding residues include His-97, His-99, Glu-103, and His-141.

This sequence belongs to the acireductone dioxygenase (ARD) family. As to quaternary structure, monomer. It depends on Fe(2+) as a cofactor. Requires Ni(2+) as cofactor.

It carries out the reaction 1,2-dihydroxy-5-(methylsulfanyl)pent-1-en-3-one + O2 = 3-(methylsulfanyl)propanoate + CO + formate + 2 H(+). It catalyses the reaction 1,2-dihydroxy-5-(methylsulfanyl)pent-1-en-3-one + O2 = 4-methylsulfanyl-2-oxobutanoate + formate + 2 H(+). Its pathway is amino-acid biosynthesis; L-methionine biosynthesis via salvage pathway; L-methionine from S-methyl-5-thio-alpha-D-ribose 1-phosphate: step 5/6. In terms of biological role, catalyzes 2 different reactions between oxygen and the acireductone 1,2-dihydroxy-3-keto-5-methylthiopentene (DHK-MTPene) depending upon the metal bound in the active site. Fe-containing acireductone dioxygenase (Fe-ARD) produces formate and 2-keto-4-methylthiobutyrate (KMTB), the alpha-ketoacid precursor of methionine in the methionine recycle pathway. Ni-containing acireductone dioxygenase (Ni-ARD) produces methylthiopropionate, carbon monoxide and formate, and does not lie on the methionine recycle pathway. The sequence is that of Acireductone dioxygenase from Pseudomonas fluorescens (strain ATCC BAA-477 / NRRL B-23932 / Pf-5).